The chain runs to 145 residues: MLRHSSTPAHVVARDLSVDYVTEEGEREAIPGTLRYDPADPFAVELILRPGEEAITWIFARALLAEGIEVPAGTGDVRIRPTRSKGQTVITVSLSSPSGHADLELAKSKVTAFLADCHGQVPAGRESNGIDWNNELHMLLRTRNT.

This sequence belongs to the SsgA family.

Its subcellular location is the cell septum. Functionally, involved in sporulation-specific cell division. In Frankia casuarinae (strain DSM 45818 / CECT 9043 / HFP020203 / CcI3), this protein is Sporulation-specific cell division protein Francci3_3418.